We begin with the raw amino-acid sequence, 459 residues long: Argininosuccinate lyase (459 aa).

The protein belongs to the lyase 1 family. Argininosuccinate lyase subfamily.

The protein localises to the cytoplasm. It catalyses the reaction 2-(N(omega)-L-arginino)succinate = fumarate + L-arginine. It participates in amino-acid biosynthesis; L-arginine biosynthesis; L-arginine from L-ornithine and carbamoyl phosphate: step 3/3. The chain is Argininosuccinate lyase from Methylobacterium radiotolerans (strain ATCC 27329 / DSM 1819 / JCM 2831 / NBRC 15690 / NCIMB 10815 / 0-1).